We begin with the raw amino-acid sequence, 667 residues long: DNA ligase (667 aa).

NAD(+) is bound by residues 34–38 (DSEYD), 83–84 (SL), and E112. The active-site N6-AMP-lysine intermediate is the K114. The NAD(+) site is built by R135, E169, K285, and K309. Zn(2+) contacts are provided by C403, C406, C421, and C426. In terms of domain architecture, BRCT spans 589–667 (ASDSYFAGKT…EARLISELKK (79 aa)).

It belongs to the NAD-dependent DNA ligase family. LigA subfamily. It depends on Mg(2+) as a cofactor. Mn(2+) serves as cofactor.

It carries out the reaction NAD(+) + (deoxyribonucleotide)n-3'-hydroxyl + 5'-phospho-(deoxyribonucleotide)m = (deoxyribonucleotide)n+m + AMP + beta-nicotinamide D-nucleotide.. Functionally, DNA ligase that catalyzes the formation of phosphodiester linkages between 5'-phosphoryl and 3'-hydroxyl groups in double-stranded DNA using NAD as a coenzyme and as the energy source for the reaction. It is essential for DNA replication and repair of damaged DNA. The chain is DNA ligase from Bacillus licheniformis (strain ATCC 14580 / DSM 13 / JCM 2505 / CCUG 7422 / NBRC 12200 / NCIMB 9375 / NCTC 10341 / NRRL NRS-1264 / Gibson 46).